Reading from the N-terminus, the 233-residue chain is MSKSTKKHSAAMTKVDRSTVYPLKTAVEVVKDTAYAKFDETVDVAVKLGVDPRHADQMVRGAVVLPNGLGKNVRVLVFAKGEKEKEALDAGADYVGADDLVAKIQEGWFEFDTAIATPDMMGVVGKIGKLLGPRGLMPNPKVGTVTFEVGRAVKESKAGKVEFRVEKAGIVHAPIGKVSFDAEKLQGNLVALVEALVKAKPSAAKGTYIKKISLSSTMGPGINLDISDVTANI.

This sequence belongs to the universal ribosomal protein uL1 family. Part of the 50S ribosomal subunit.

In terms of biological role, binds directly to 23S rRNA. The L1 stalk is quite mobile in the ribosome, and is involved in E site tRNA release. Its function is as follows. Protein L1 is also a translational repressor protein, it controls the translation of the L11 operon by binding to its mRNA. The chain is Large ribosomal subunit protein uL1 from Trichlorobacter lovleyi (strain ATCC BAA-1151 / DSM 17278 / SZ) (Geobacter lovleyi).